A 908-amino-acid chain; its full sequence is Protein translocase subunit SecA (908 aa).

Residues Q87, 105–109 (GEGKT), and D512 each bind ATP. Residues 882–908 (DGEKVGRNDPCPCGSGKKYKQCHGKLT) form a disordered region. Residues C892, C894, C903, and H904 each contribute to the Zn(2+) site. Over residues 898–908 (KKYKQCHGKLT) the composition is skewed to basic residues.

The protein belongs to the SecA family. As to quaternary structure, monomer and homodimer. Part of the essential Sec protein translocation apparatus which comprises SecA, SecYEG and auxiliary proteins SecDF-YajC and YidC. Zn(2+) serves as cofactor.

The protein localises to the cell inner membrane. The protein resides in the cytoplasm. It carries out the reaction ATP + H2O + cellular proteinSide 1 = ADP + phosphate + cellular proteinSide 2.. Its function is as follows. Part of the Sec protein translocase complex. Interacts with the SecYEG preprotein conducting channel. Has a central role in coupling the hydrolysis of ATP to the transfer of proteins into and across the cell membrane, serving both as a receptor for the preprotein-SecB complex and as an ATP-driven molecular motor driving the stepwise translocation of polypeptide chains across the membrane. The sequence is that of Protein translocase subunit SecA from Shewanella amazonensis (strain ATCC BAA-1098 / SB2B).